The following is a 919-amino-acid chain: Periodic tryptophan protein 2 homolog (919 aa).

WD repeat units follow at residues 12–50 (GTVY…SDTL), 53–93 (ATRY…LHHF), 94–132 (HFKG…REFN), 142–181 (GPYD…NLIY), and 186–225 (GHKD…EGLR). Residues 238-267 (QREEEEEEEEDQEGDRETTIRGKATPAEEE) are disordered. The segment covering 240-251 (EEEEEEEEDQEG) has biased composition (acidic residues). Residues 252–267 (DRETTIRGKATPAEEE) show a composition bias toward basic and acidic residues. WD repeat units follow at residues 286–325 (GDFN…LIHS), 328–368 (ISDQ…YVLK), 371–410 (GHFN…CFVT), 413–452 (EHSS…NFRT), 456–498 (PRPT…DVLS), 499–538 (GHEG…RTKE), 541–580 (ALTS…QTGS), 603–642 (AKGK…LMKR), and 700–740 (KPEI…DPFE). The tract at residues 882-919 (TKRSLDPLGSEEEAEASEDDSLHLLGGGGRDSEEEMLA) is disordered. Residues 890 to 900 (GSEEEAEASED) are compositionally biased toward acidic residues. 2 positions are modified to phosphoserine: Ser-898 and Ser-902.

Belongs to the WD repeat PWP2 family. Part of the small subunit (SSU) processome, composed of more than 70 proteins and the RNA chaperone small nucleolar RNA (snoRNA) U3.

The protein localises to the nucleus. The protein resides in the nucleolus. In terms of biological role, part of the small subunit (SSU) processome, first precursor of the small eukaryotic ribosomal subunit. During the assembly of the SSU processome in the nucleolus, many ribosome biogenesis factors, an RNA chaperone and ribosomal proteins associate with the nascent pre-rRNA and work in concert to generate RNA folding, modifications, rearrangements and cleavage as well as targeted degradation of pre-ribosomal RNA by the RNA exosome. This is Periodic tryptophan protein 2 homolog from Homo sapiens (Human).